The primary structure comprises 495 residues: Keratin, type II cuticular 87 (495 aa).

Positions 1 to 111 (MSCFSSRLGA…PNAQCVKHEE (111 aa)) are head. The region spanning 111–422 (EKEQIKCLNS…RLLEGEEQRL (312 aa)) is the IF rod domain. A coil 1A region spans residues 112 to 146 (KEQIKCLNSKFAAFIDKVRFLEQQNKLLETKWQFY). A linker 1 region spans residues 147–156 (QNRKCCESNM). The interval 157–257 (EPLFEGYIEA…YEEETRLLHS (101 aa)) is coil 1B. A linker 12 region spans residues 258 to 274 (HISDTSVVVKMDNSRDL). Positions 275-418 (NMDCVVAEIK…ITYRRLLEGE (144 aa)) are coil 2. A tail region spans residues 419 to 494 (EQRLCEGVGS…TCGSSRSVRF (76 aa)).

The protein belongs to the intermediate filament family. As to quaternary structure, heterotetramer of two type I and two type II keratins.

The chain is Keratin, type II cuticular 87 from Mus musculus (Mouse).